A 70-amino-acid polypeptide reads, in one-letter code: Translational regulator CsrA (70 aa).

Belongs to the CsrA/RsmA family. As to quaternary structure, homodimer; the beta-strands of each monomer intercalate to form a hydrophobic core, while the alpha-helices form wings that extend away from the core.

The protein resides in the cytoplasm. Functionally, a key translational regulator that binds mRNA to regulate translation initiation and/or mRNA stability. Mediates global changes in gene expression, shifting from rapid growth to stress survival by linking envelope stress, the stringent response and the catabolite repression systems. Usually binds in the 5'-UTR; binding at or near the Shine-Dalgarno sequence prevents ribosome-binding, repressing translation, binding elsewhere in the 5'-UTR can activate translation and/or stabilize the mRNA. Its function is antagonized by small RNA(s). The polypeptide is Translational regulator CsrA (Hydrogenovibrio crunogenus (strain DSM 25203 / XCL-2) (Thiomicrospira crunogena)).